Consider the following 553-residue polypeptide: Glucose-6-phosphate isomerase (553 aa).

D-glucose 6-phosphate-binding positions include 164–165 (GS), 215–220 (SKTFTT), Gln-359, Glu-363, His-394, and Lys-516. The Proton donor role is filled by Glu-363. Active-site residues include His-394 and Lys-516.

The protein belongs to the GPI family. In terms of assembly, homodimer.

The protein localises to the cytoplasm. The protein resides in the cytosol. The enzyme catalyses alpha-D-glucose 6-phosphate = beta-D-fructose 6-phosphate. Its pathway is carbohydrate degradation; glycolysis; D-glyceraldehyde 3-phosphate and glycerone phosphate from D-glucose: step 2/4. Functionally, in the cytoplasm, catalyzes the conversion of glucose-6-phosphate to fructose-6-phosphate, the second step in glycolysis, and the reverse reaction during gluconeogenesis. This chain is Glucose-6-phosphate isomerase (pgiA), found in Aspergillus oryzae (strain ATCC 42149 / RIB 40) (Yellow koji mold).